Consider the following 538-residue polypeptide: Putative amidase kk1C (538 aa).

The interval 1–32 (MTEPTWKTVASEKQQQRESKIPSEWQIPKSSH) is disordered. Active-site charge relay system residues include Lys-134 and Ser-209. The Acyl-ester intermediate role is filled by Ser-233.

This sequence belongs to the amidase family.

It carries out the reaction a monocarboxylic acid amide + H2O = a monocarboxylate + NH4(+). It functions in the pathway secondary metabolite biosynthesis. In terms of biological role, putative amidase; part of the gene cluster that mediates the biosynthesis of KK-1, a novel cyclic depsipeptide with 10 residues which is a promising active compound with high activity against many plant pathogens, especially Botrytis cinerea. The role of kk1C in KK-1 biosynthesis has still to be determined. The nonribosomal peptide synthetase (NRPS) kk1B catalyzes the elongation and cyclization of the decapeptide chain composed of 1 D-lactic acid residue (D-Lac), 1 pipecolic acid residue (Pip), 1 aspartic acid residue (Asp), 1 isoleucine residue (Ile), 1 glycine residue (Gly), 1 tyrosine residue (Tyr) and 4 valine residues (Val). The Asp, Ile and 3 Val residues are N-methylated by the 5 methyltransferase domains from the NRPS (found in modules 3, 5, 6, 7 and 9), whereas the Tyr residue is O-methylated by the cluster encoded O-methyltransferase kk1A. The thioesterase kk1J is likely to be involved in the corrective mechanism of peptide chain synthesis. The D-lactate dehydrogenase kk1H is involved in the synthesis of D-lactic acid from pyruvic acid, which is recognized by the A domain of the first kk1B module. The pyrroline-5-carboxylate reductase kk1I is involved in the synthesis of the L-pipecolic acid residue of KK-1 from delta-1-pyrroline-5-carboxylate (P5C), a metabolic intermediate of lysine. It is still unclear how kk1C and kk1D are involved in the production of KK-1. This chain is Putative amidase kk1C, found in Curvularia clavata.